The primary structure comprises 247 residues: Syntaxin-like protein fsv1 (247 aa).

A coiled-coil region spans residues 27-94; that stretch reads NPDEEIESSL…FEKQRRASSI (68 aa). The interval 88-130 is disordered; sequence QRRASSIPADGTSAFSANPQVASTNNKLTPLPSLQKTTSSSEG. Residues 100-130 are compositionally biased toward polar residues; the sequence is SAFSANPQVASTNNKLTPLPSLQKTTSSSEG. One can recognise a t-SNARE coiled-coil homology domain in the interval 159–221; the sequence is QQMLNEQEES…DHAKNRLNKV (63 aa).

The protein resides in the golgi apparatus membrane. The protein localises to the prevacuolar compartment membrane. Involved in vesicle-mediated protein transport between the Golgi and the vacuole. The polypeptide is Syntaxin-like protein fsv1 (fsv1) (Schizosaccharomyces pombe (strain 972 / ATCC 24843) (Fission yeast)).